Here is a 182-residue protein sequence, read N- to C-terminus: Antigenic integral membrane glycoprotein (182 aa).

A signal peptide spans 1-35 (MFSFHERMKKKHVTIRVYKHERILVFLFVLFISTT). 2 N-linked (GlcNAc...) asparagine glycosylation sites follow: Asn-88 and Asn-120. Residues 162–180 (EFLMSSCIVITLNLFIFMY) form a helical membrane-spanning segment. Residue Cys-168 is the site of S-palmitoyl cysteine attachment.

Its subcellular location is the cell membrane. Major antigen in the surface tegument. This chain is Antigenic integral membrane glycoprotein, found in Schistosoma mansoni (Blood fluke).